We begin with the raw amino-acid sequence, 138 residues long: uncharacterized protein (138 aa).

Position 110 is a phosphoserine (Ser110).

Its subcellular location is the cytoplasm. The protein localises to the nucleus. This is an uncharacterized protein from Schizosaccharomyces pombe (strain 972 / ATCC 24843) (Fission yeast).